The chain runs to 147 residues: Allograft inflammatory factor 1 (147 aa).

S2 carries the post-translational modification N-acetylserine. At K11 the chain carries N6-acetyllysine. At S39 the chain carries Phosphoserine. EF-hand domains are found at residues 45–80 and 81–115; these read SKLEGFKEKYMEFDLNGNGDIDIMSLKRMLEKLGVP and KTHLELKKLIGEVSSGSGETFSYPDFLRMMLGKRS. Residues D58, N60, N62, D64, T100, and D105 each contribute to the Ca(2+) site. Residues 128–147 form a disordered region; it reads AREKEKPTGPPAKKAISELP.

Homodimer (Potential). Monomer. Interacts with LCP1. Post-translationally, phosphorylated on serine residues.

It localises to the cytoplasm. Its subcellular location is the cytoskeleton. The protein localises to the cell projection. It is found in the ruffle membrane. The protein resides in the phagocytic cup. Its function is as follows. Actin-binding protein that enhances membrane ruffling and RAC activation. Enhances the actin-bundling activity of LCP1. Binds calcium. Plays a role in RAC signaling and in phagocytosis. May play a role in macrophage activation and function. Promotes the proliferation of vascular smooth muscle cells and of T-lymphocytes. Enhances lymphocyte migration. Plays a role in vascular inflammation. The protein is Allograft inflammatory factor 1 (AIF1) of Macaca mulatta (Rhesus macaque).